Reading from the N-terminus, the 66-residue chain is ATP synthase protein 8 (66 aa).

Residues 8–24 form a helical membrane-spanning segment; the sequence is TWLMMIMSMFLALFIIF. An N6-acetyllysine; alternate modification is found at Lys54. Lys54 is modified (N6-succinyllysine; alternate). Lys57 carries the N6-acetyllysine modification.

Belongs to the ATPase protein 8 family. In terms of assembly, F-type ATPases have 2 components, CF(1) - the catalytic core - and CF(0) - the membrane proton channel. Component of an ATP synthase complex composed of ATP5PB, ATP5MC1, ATP5F1E, ATP5PD, ATP5ME, ATP5PF, ATP5MF, MT-ATP6, MT-ATP8, ATP5F1A, ATP5F1B, ATP5F1D, ATP5F1C, ATP5PO, ATP5MG, ATP5MK and ATP5MJ. Interacts with PRICKLE3.

It is found in the mitochondrion membrane. Functionally, mitochondrial membrane ATP synthase (F(1)F(0) ATP synthase or Complex V) produces ATP from ADP in the presence of a proton gradient across the membrane which is generated by electron transport complexes of the respiratory chain. F-type ATPases consist of two structural domains, F(1) - containing the extramembraneous catalytic core and F(0) - containing the membrane proton channel, linked together by a central stalk and a peripheral stalk. During catalysis, ATP synthesis in the catalytic domain of F(1) is coupled via a rotary mechanism of the central stalk subunits to proton translocation. Part of the complex F(0) domain. Minor subunit located with subunit a in the membrane. The sequence is that of ATP synthase protein 8 (MT-ATP8) from Cervus elaphus hippelaphus (European red deer).